Here is an 875-residue protein sequence, read N- to C-terminus: cGMP-specific 3',5'-cyclic phosphodiesterase (875 aa).

Disordered stretches follow at residues 1-29 (MERAGPSFGQQRQQQQPQQQKQQQRDQDS) and 78-102 (SCSCPLQQSPRADNSAPGTPTRKIS). Over residues 10-22 (QQRQQQQPQQQKQ) the composition is skewed to low complexity. The span at 78–101 (SCSCPLQQSPRADNSAPGTPTRKI) shows a compositional bias: polar residues. Residue Ser102 is modified to Phosphoserine. GAF domains lie at 164-314 (DVTA…GIVL) and 346-503 (SLEV…GLGI). The 325-residue stretch at 536 to 860 (ETRELQSLAA…QKWQALAEQQ (325 aa)) folds into the PDEase domain. Catalysis depends on His613, which acts as the Proton donor. Residues His617, His653, Asp654, and Asp764 each contribute to the Zn(2+) site. Asp654 lines the Mg(2+) pocket. Gln817 contacts 3',5'-cyclic GMP.

Belongs to the cyclic nucleotide phosphodiesterase family. Zn(2+) serves as cofactor. It depends on Mg(2+) as a cofactor. Phosphorylation is regulated by binding of cGMP to the two allosteric sites. Phosphorylation by PRKG1 leads to its activation. Expressed in aortic smooth muscle cells, heart, placenta, skeletal muscle and pancreas and, to a much lesser extent, in brain, liver and lung.

It catalyses the reaction 3',5'-cyclic GMP + H2O = GMP + H(+). Its pathway is purine metabolism; 3',5'-cyclic GMP degradation; GMP from 3',5'-cyclic GMP: step 1/1. Its activity is regulated as follows. Sildenafil (Viagra) is a highly selective and potent inhibitor of PDE5A and is effective in the treatment of penile erectile dysfunction. Also inhibited by zaprinast. Functionally, plays a role in signal transduction by regulating the intracellular concentration of cyclic nucleotides. This phosphodiesterase catalyzes the specific hydrolysis of cGMP to 5'-GMP. Specifically regulates nitric-oxide-generated cGMP. This is cGMP-specific 3',5'-cyclic phosphodiesterase from Homo sapiens (Human).